The following is a 256-amino-acid chain: Ribonuclease HII (256 aa).

The region spanning 72–256 (ALICGIDEVG…TFEPIKSLVN (185 aa)) is the RNase H type-2 domain. Residues Asp-78, Glu-79, and Asp-170 each coordinate a divalent metal cation.

Belongs to the RNase HII family. It depends on Mn(2+) as a cofactor. Mg(2+) serves as cofactor.

The protein resides in the cytoplasm. It carries out the reaction Endonucleolytic cleavage to 5'-phosphomonoester.. Functionally, endonuclease that specifically degrades the RNA of RNA-DNA hybrids. This Staphylococcus saprophyticus subsp. saprophyticus (strain ATCC 15305 / DSM 20229 / NCIMB 8711 / NCTC 7292 / S-41) protein is Ribonuclease HII.